The chain runs to 1079 residues: Psi-producing oxygenase A (1079 aa).

The segment at 105-446 (TNTFLTTLWN…DGSYDDNDLV (342 aa)) is linoleate 8R-lipoxygenase. His202 serves as a coordination point for heme b. Tyr374 is an active-site residue. His377 provides a ligand contact to heme b. The 9,12-octadecadienoate 8-hydroperoxide 8R-isomerase stretch occupies residues 654–1079 (QFINSHSACM…WDGDLPEVKE (426 aa)).

It belongs to the peroxidase family. In terms of assembly, homotetramer. It depends on heme b as a cofactor.

The catalysed reaction is (9Z,12Z)-octadecadienoate + O2 = (8R,9Z,12Z)-8-hydroperoxyoctadeca-9,12-dienoate. The enzyme catalyses (8R,9Z,12Z)-8-hydroperoxyoctadeca-9,12-dienoate = (5S,8R,9Z,12Z)-5,8-dihydroxyoctadeca-9,12-dienoate. Its function is as follows. Bifunctional heme-containing enzyme that oxidizes linoleic acid to (8R,9Z,12Z)-8-hydroperoxyoctadeca-9,12-dienoate (within the N-terminal heme peroxidase domain), which is subsequently isomerized to (5S,8R,9Z,12Z)-5,8-dihydroxyoctadeca-9,12-dienoate (within the C-terminal P450 heme thiolate domain). Oxidized unsaturated fatty acids, so-called oxylipins, derived from endogenous fatty acids, influence the development of the asexual conidiophores and sexual cleistothecia and regulate the secondary metabolism. These substances were collectively named psi factors and are primarily a mixture of hydroxylated oleic, linoleic and alpha-linolenic acids. They are termed psi-beta, psi-alpha, and psi-gamma, respectively. Oxylipins may also serve as activators of mammalian immune responses contributing to enhanced resistance to opportunistic fungi and as factors that modulate fungal development contributing to resistance to host defenses. This is Psi-producing oxygenase A (ppoA) from Aspergillus fumigatus (strain ATCC MYA-4609 / CBS 101355 / FGSC A1100 / Af293) (Neosartorya fumigata).